The chain runs to 545 residues: CTP synthase (545 aa).

The tract at residues Met1–Leu265 is amidoligase domain. Ser13 provides a ligand contact to CTP. Ser13 is a binding site for UTP. ATP is bound by residues Ser14–Ile19 and Asp71. Residues Asp71 and Glu139 each coordinate Mg(2+). Residues Asp146–Glu148, Lys186–Gln191, and Lys222 contribute to the CTP site. UTP is bound by residues Lys186–Gln191 and Lys222. The region spanning Lys290–Glu541 is the Glutamine amidotransferase type-1 domain. An L-glutamine-binding site is contributed by Gly351. The active-site Nucleophile; for glutamine hydrolysis is the Cys378. L-glutamine is bound by residues Leu379–Gln382, Glu402, and Arg469. Residues His514 and Glu516 contribute to the active site.

Belongs to the CTP synthase family. In terms of assembly, homotetramer.

The catalysed reaction is UTP + L-glutamine + ATP + H2O = CTP + L-glutamate + ADP + phosphate + 2 H(+). It carries out the reaction L-glutamine + H2O = L-glutamate + NH4(+). The enzyme catalyses UTP + NH4(+) + ATP = CTP + ADP + phosphate + 2 H(+). It functions in the pathway pyrimidine metabolism; CTP biosynthesis via de novo pathway; CTP from UDP: step 2/2. With respect to regulation, allosterically activated by GTP, when glutamine is the substrate; GTP has no effect on the reaction when ammonia is the substrate. The allosteric effector GTP functions by stabilizing the protein conformation that binds the tetrahedral intermediate(s) formed during glutamine hydrolysis. Inhibited by the product CTP, via allosteric rather than competitive inhibition. Its function is as follows. Catalyzes the ATP-dependent amination of UTP to CTP with either L-glutamine or ammonia as the source of nitrogen. Regulates intracellular CTP levels through interactions with the four ribonucleotide triphosphates. This chain is CTP synthase, found in Legionella pneumophila (strain Corby).